The sequence spans 166 residues: Large ribosomal subunit protein uL10 (166 aa).

Belongs to the universal ribosomal protein uL10 family. Part of the ribosomal stalk of the 50S ribosomal subunit. The N-terminus interacts with L11 and the large rRNA to form the base of the stalk. The C-terminus forms an elongated spine to which L12 dimers bind in a sequential fashion forming a multimeric L10(L12)X complex.

Its function is as follows. Forms part of the ribosomal stalk, playing a central role in the interaction of the ribosome with GTP-bound translation factors. The chain is Large ribosomal subunit protein uL10 from Mesoplasma florum (strain ATCC 33453 / NBRC 100688 / NCTC 11704 / L1) (Acholeplasma florum).